The following is a 347-amino-acid chain: DNA-directed RNA polymerase subunit alpha (347 aa).

The interval 1 to 243 (MLIKQGDRLI…DQISVFINFD (243 aa)) is alpha N-terminal domain (alpha-NTD). The tract at residues 260-347 (FNEHLFKSID…EWKRKQQHEA (88 aa)) is alpha C-terminal domain (alpha-CTD).

Belongs to the RNA polymerase alpha chain family. Homodimer. The RNAP catalytic core consists of 2 alpha, 1 beta, 1 beta' and 1 omega subunit. When a sigma factor is associated with the core the holoenzyme is formed, which can initiate transcription.

It carries out the reaction RNA(n) + a ribonucleoside 5'-triphosphate = RNA(n+1) + diphosphate. DNA-dependent RNA polymerase catalyzes the transcription of DNA into RNA using the four ribonucleoside triphosphates as substrates. This chain is DNA-directed RNA polymerase subunit alpha, found in Nitratidesulfovibrio vulgaris (strain ATCC 29579 / DSM 644 / CCUG 34227 / NCIMB 8303 / VKM B-1760 / Hildenborough) (Desulfovibrio vulgaris).